The sequence spans 401 residues: 8-amino-7-oxononanoate synthase (401 aa).

Substrate is bound at residue R19. 106–107 is a pyridoxal 5'-phosphate binding site; that stretch reads GY. H131 is a binding site for substrate. Pyridoxal 5'-phosphate is bound by residues S176, H204, and T233. K236 is subject to N6-(pyridoxal phosphate)lysine. Residue T350 coordinates substrate.

It belongs to the class-II pyridoxal-phosphate-dependent aminotransferase family. BioF subfamily. In terms of assembly, homodimer. Pyridoxal 5'-phosphate serves as cofactor.

The catalysed reaction is 6-carboxyhexanoyl-[ACP] + L-alanine + H(+) = (8S)-8-amino-7-oxononanoate + holo-[ACP] + CO2. It participates in cofactor biosynthesis; biotin biosynthesis. In terms of biological role, catalyzes the decarboxylative condensation of pimeloyl-[acyl-carrier protein] and L-alanine to produce 8-amino-7-oxononanoate (AON), [acyl-carrier protein], and carbon dioxide. The chain is 8-amino-7-oxononanoate synthase from Pseudomonas paraeruginosa (strain DSM 24068 / PA7) (Pseudomonas aeruginosa (strain PA7)).